Reading from the N-terminus, the 109-residue chain is Probable guanidinium efflux system subunit GdnC (109 aa).

The next 4 helical transmembrane spans lie at 3 to 23, 26 to 46, 55 to 75, and 81 to 101; these read WGSV…LKHA, ALEW…LVKA, VYAV…IALF, and IAKL…KLVT.

The protein belongs to the drug/metabolite transporter (DMT) superfamily. Small multidrug resistance (SMR) (TC 2.A.7.1) family. YkkC/YkkD subfamily. The efflux pump is composed of GdnC and GdnD.

The protein resides in the cell membrane. Probably involved in guanidinium transport. The sequence is that of Probable guanidinium efflux system subunit GdnC from Bacillus licheniformis (strain ATCC 14580 / DSM 13 / JCM 2505 / CCUG 7422 / NBRC 12200 / NCIMB 9375 / NCTC 10341 / NRRL NRS-1264 / Gibson 46).